The following is a 55-amino-acid chain: ATP synthase F(0) complex subunit 8 (55 aa).

The chain crosses the membrane as a helical span at residues 7–24 (APWFSIMIMTWLTLALLI). A disordered region spans residues 34 to 55 (TNPPSSKPSLTTKPTPWAWPWT).

It belongs to the ATPase protein 8 family. Component of the ATP synthase complex composed at least of ATP5F1A/subunit alpha, ATP5F1B/subunit beta, ATP5MC1/subunit c (homooctomer), MT-ATP6/subunit a, MT-ATP8/subunit 8, ATP5ME/subunit e, ATP5MF/subunit f, ATP5MG/subunit g, ATP5MK/subunit k, ATP5MJ/subunit j, ATP5F1C/subunit gamma, ATP5F1D/subunit delta, ATP5F1E/subunit epsilon, ATP5PF/subunit F6, ATP5PB/subunit b, ATP5PD/subunit d, ATP5PO/subunit OSCP. ATP synthase complex consists of a soluble F(1) head domain (subunits alpha(3) and beta(3)) - the catalytic core - and a membrane F(0) domain - the membrane proton channel (subunits c, a, 8, e, f, g, k and j). These two domains are linked by a central stalk (subunits gamma, delta, and epsilon) rotating inside the F1 region and a stationary peripheral stalk (subunits F6, b, d, and OSCP).

The protein resides in the mitochondrion membrane. Its function is as follows. Subunit 8, of the mitochondrial membrane ATP synthase complex (F(1)F(0) ATP synthase or Complex V) that produces ATP from ADP in the presence of a proton gradient across the membrane which is generated by electron transport complexes of the respiratory chain. ATP synthase complex consist of a soluble F(1) head domain - the catalytic core - and a membrane F(1) domain - the membrane proton channel. These two domains are linked by a central stalk rotating inside the F(1) region and a stationary peripheral stalk. During catalysis, ATP synthesis in the catalytic domain of F(1) is coupled via a rotary mechanism of the central stalk subunits to proton translocation. In vivo, can only synthesize ATP although its ATP hydrolase activity can be activated artificially in vitro. Part of the complex F(0) domain. The chain is ATP synthase F(0) complex subunit 8 from Aythya americana (Redhead).